The following is a 472-amino-acid chain: Serine/threonine-protein kinase sax-1 (472 aa).

The Protein kinase domain maps to 87–381 (FESLKVIGRG…LDEIKQCPFF (295 aa)). ATP is bound by residues 93–101 (IGRGAFGEV) and Lys-116. Asp-210 acts as the Proton acceptor in catalysis. The AGC-kinase C-terminal domain occupies 382-452 (RRIDWNHIRE…KRFDGLTQKM (71 aa)).

Belongs to the protein kinase superfamily. AGC Ser/Thr protein kinase family. Requires Mg(2+) as cofactor.

It localises to the cytoplasm. The protein resides in the nucleus. The catalysed reaction is L-seryl-[protein] + ATP = O-phospho-L-seryl-[protein] + ADP + H(+). It catalyses the reaction L-threonyl-[protein] + ATP = O-phospho-L-threonyl-[protein] + ADP + H(+). Its function is as follows. Acts with sax-2 to restrict the growth of both primary and secondary neurites. Regulates mechanosensory tiling by controlling the termination point of sensory dendrites. In Caenorhabditis briggsae, this protein is Serine/threonine-protein kinase sax-1.